We begin with the raw amino-acid sequence, 248 residues long: Deoxyribose-phosphate aldolase (248 aa).

Aspartate 117 serves as the catalytic Proton donor/acceptor. The Schiff-base intermediate with acetaldehyde role is filled by lysine 179. Residue lysine 208 is the Proton donor/acceptor of the active site.

The protein belongs to the DeoC/FbaB aldolase family. DeoC type 1 subfamily.

It is found in the cytoplasm. The enzyme catalyses 2-deoxy-D-ribose 5-phosphate = D-glyceraldehyde 3-phosphate + acetaldehyde. The protein operates within carbohydrate degradation; 2-deoxy-D-ribose 1-phosphate degradation; D-glyceraldehyde 3-phosphate and acetaldehyde from 2-deoxy-alpha-D-ribose 1-phosphate: step 2/2. In terms of biological role, catalyzes a reversible aldol reaction between acetaldehyde and D-glyceraldehyde 3-phosphate to generate 2-deoxy-D-ribose 5-phosphate. The protein is Deoxyribose-phosphate aldolase of Thermotoga maritima (strain ATCC 43589 / DSM 3109 / JCM 10099 / NBRC 100826 / MSB8).